The chain runs to 370 residues: MAESNKEAIDSARSNVFKESESLEGTCAKIGGYDFNNGIDHSKLLKSMVSTGFQASNLGDAMIITNQMLEWRLSHDEVPEHCSEEEKKNRESVKCKIFLGFTSNLISSGVRETICYLAQHRMVDVLVTTTGGIEEDFIKCLASTYKGKFSLPGADLRSKGLNRIGNLIVPNDNYIKFEDWIIPIFDQMLIEQKTQNVLWTPSRMIARLGKEINNETSYLYWAYKNNIPVFCPSITDGSIGDMLYFHSVSNPGPGLVVDIVQDVIAMDNEAVHASPQKTGIIILGGGLPKHHICNANMMRNGADFAVFINTAQEYDGSDSGARPDEAVSWGKISSTGKAVKVHCDATIAFPLLVAETFAVKKEKASKVNGF.

This sequence belongs to the deoxyhypusine synthase family. Homotetramer. NAD(+) serves as cofactor. In terms of processing, the N-terminus is blocked. Expressed in roots.

It carries out the reaction putrescine + spermidine = sym-homospermidine + propane-1,3-diamine. It participates in alkaloid biosynthesis; pyrrolizidine alkaloid biosynthesis. In terms of biological role, catalyzes the transfer of an aminobutyl unit from spermidine onto putrescine. The resulting polyamine homospermidine is a precursor in the biosynthesis of pyrrolizidine alkaloids. The sequence is that of Homospermidine synthase 2 from Senecio vernalis (Spring groundsel).